Consider the following 361-residue polypeptide: Alcohol dehydrogenase 9 (361 aa).

Zn(2+) contacts are provided by Cys-51, Thr-53, His-73, Cys-104, Cys-107, Cys-110, Cys-118, and Cys-167. Residues Thr-53 and His-73 each contribute to the an alcohol site. Thr-53 contributes to the NAD(+) binding site. NAD(+) is bound by residues 192–197, Lys-221, 278–280, and Lys-356; these read GLGGLG and LGA.

The protein belongs to the zinc-containing alcohol dehydrogenase family. Class-III subfamily. Homodimer. It depends on Zn(2+) as a cofactor.

This is Alcohol dehydrogenase 9 from Catharanthus roseus (Madagascar periwinkle).